Reading from the N-terminus, the 299-residue chain is Urease accessory protein UreD (299 aa).

The protein belongs to the UreD family. As to quaternary structure, ureD, UreF and UreG form a complex that acts as a GTP-hydrolysis-dependent molecular chaperone, activating the urease apoprotein by helping to assemble the nickel containing metallocenter of UreC. The UreE protein probably delivers the nickel.

It localises to the cytoplasm. Functionally, required for maturation of urease via the functional incorporation of the urease nickel metallocenter. The protein is Urease accessory protein UreD of Natronomonas pharaonis (strain ATCC 35678 / DSM 2160 / CIP 103997 / JCM 8858 / NBRC 14720 / NCIMB 2260 / Gabara) (Halobacterium pharaonis).